Here is a 302-residue protein sequence, read N- to C-terminus: 4-diphosphocytidyl-2-C-methyl-D-erythritol kinase (302 aa).

The active site involves lysine 11. 93 to 103 (PVASGLAGGST) lines the ATP pocket. Aspartate 135 is a catalytic residue.

It belongs to the GHMP kinase family. IspE subfamily.

It catalyses the reaction 4-CDP-2-C-methyl-D-erythritol + ATP = 4-CDP-2-C-methyl-D-erythritol 2-phosphate + ADP + H(+). It participates in isoprenoid biosynthesis; isopentenyl diphosphate biosynthesis via DXP pathway; isopentenyl diphosphate from 1-deoxy-D-xylulose 5-phosphate: step 3/6. Functionally, catalyzes the phosphorylation of the position 2 hydroxy group of 4-diphosphocytidyl-2C-methyl-D-erythritol. In Gloeobacter violaceus (strain ATCC 29082 / PCC 7421), this protein is 4-diphosphocytidyl-2-C-methyl-D-erythritol kinase.